Consider the following 193-residue polypeptide: Zinc finger protein 740 (193 aa).

Positions 33 to 75 are disordered; the sequence is SKQAENGERAGSPDVLRCSSQGHRKDSDKSRSRKDDDSLSEAS. Lysine 34 is covalently cross-linked (Glycyl lysine isopeptide (Lys-Gly) (interchain with G-Cter in SUMO2)). Residue serine 44 is modified to Phosphoserine. Over residues 55-69 the composition is skewed to basic and acidic residues; that stretch reads HRKDSDKSRSRKDDD. 2 consecutive C2H2-type zinc fingers follow at residues 101 to 123 and 129 to 151; these read FVCE…ILIH and FECD…KRVH. The C2H2-type 3; atypical zinc finger occupies 157 to 179; it reads YQCERCHQCFSRTDRLLRHKRMC.

Belongs to the krueppel C2H2-type zinc-finger protein family.

It localises to the nucleus. Its function is as follows. May be involved in transcriptional regulation. In Homo sapiens (Human), this protein is Zinc finger protein 740 (ZNF740).